We begin with the raw amino-acid sequence, 1224 residues long: DNA-directed RNA polymerase subunit beta' (1224 aa).

The Zn(2+) site is built by Cys60, Cys62, Cys75, and Cys78. Residues Asp449, Asp451, and Asp453 each contribute to the Mg(2+) site. Zn(2+) contacts are provided by Cys819, Cys893, Cys900, and Cys903.

Belongs to the RNA polymerase beta' chain family. In terms of assembly, the RNAP catalytic core consists of 2 alpha, 1 beta, 1 beta' and 1 omega subunit. When a sigma factor is associated with the core the holoenzyme is formed, which can initiate transcription. Mg(2+) serves as cofactor. The cofactor is Zn(2+).

The catalysed reaction is RNA(n) + a ribonucleoside 5'-triphosphate = RNA(n+1) + diphosphate. DNA-dependent RNA polymerase catalyzes the transcription of DNA into RNA using the four ribonucleoside triphosphates as substrates. This Lactobacillus johnsonii (strain CNCM I-12250 / La1 / NCC 533) protein is DNA-directed RNA polymerase subunit beta'.